A 485-amino-acid polypeptide reads, in one-letter code: Arginine biosynthesis bifunctional protein ArgJ, mitochondrial (485 aa).

Substrate is bound by residues Thr185, Lys214, Thr225, and Glu315. Thr225 (nucleophile) is an active-site residue.

Belongs to the ArgJ family. In terms of assembly, heterodimer of an alpha and a beta chain. The alpha and beta chains are autoproteolytically processed from a single precursor protein within the mitochondrion.

Its subcellular location is the mitochondrion matrix. It catalyses the reaction N(2)-acetyl-L-ornithine + L-glutamate = N-acetyl-L-glutamate + L-ornithine. The catalysed reaction is L-glutamate + acetyl-CoA = N-acetyl-L-glutamate + CoA + H(+). The protein operates within amino-acid biosynthesis; L-arginine biosynthesis; L-ornithine and N-acetyl-L-glutamate from L-glutamate and N(2)-acetyl-L-ornithine (cyclic): step 1/1. Its pathway is amino-acid biosynthesis; L-arginine biosynthesis; N(2)-acetyl-L-ornithine from L-glutamate: step 1/4. In terms of biological role, catalyzes two activities which are involved in the cyclic version of arginine biosynthesis: the synthesis of acetylglutamate from glutamate and acetyl-CoA, and of ornithine by transacetylation between acetylornithine and glutamate. In Penicillium rubens (strain ATCC 28089 / DSM 1075 / NRRL 1951 / Wisconsin 54-1255) (Penicillium chrysogenum), this protein is Arginine biosynthesis bifunctional protein ArgJ, mitochondrial.